The sequence spans 208 residues: MEKHMKVVAFERQQQGTGASRRLRNAGKTTGIVYGGEAAPQMIELDHNALWHALKKEAFHSSILDLEVAGKSQRVLLRDVQYHPFRQLVLHVDFQRIDPKKKLHTKAPLHFLNAETSPAVKLSSAVVSHVVTEIEIECLPADLPEFLEVDLSKIEAGQSLHAKDIALPNGVALTAHVDAENPVIASATIPAGAVSDEAAAGEGETPAA.

This sequence belongs to the bacterial ribosomal protein bL25 family. CTC subfamily. Part of the 50S ribosomal subunit; part of the 5S rRNA/L5/L18/L25 subcomplex. Contacts the 5S rRNA. Binds to the 5S rRNA independently of L5 and L18.

This is one of the proteins that binds to the 5S RNA in the ribosome where it forms part of the central protuberance. In Burkholderia pseudomallei (strain K96243), this protein is Large ribosomal subunit protein bL25.